The primary structure comprises 254 residues: Phosphoribosylaminoimidazole-succinocarboxamide synthase (254 aa).

This sequence belongs to the SAICAR synthetase family.

It catalyses the reaction 5-amino-1-(5-phospho-D-ribosyl)imidazole-4-carboxylate + L-aspartate + ATP = (2S)-2-[5-amino-1-(5-phospho-beta-D-ribosyl)imidazole-4-carboxamido]succinate + ADP + phosphate + 2 H(+). It participates in purine metabolism; IMP biosynthesis via de novo pathway; 5-amino-1-(5-phospho-D-ribosyl)imidazole-4-carboxamide from 5-amino-1-(5-phospho-D-ribosyl)imidazole-4-carboxylate: step 1/2. This is Phosphoribosylaminoimidazole-succinocarboxamide synthase from Brucella abortus (strain S19).